Reading from the N-terminus, the 56-residue chain is Potassium channel toxin alpha-KTx 9.2 (56 aa).

An N-terminal signal peptide occupies residues 1 to 28 (MSRLFTLVLIVLAMNVMMAIISDPVVEA). 3 disulfide bridges follow: cysteine 31–cysteine 47, cysteine 34–cysteine 52, and cysteine 38–cysteine 54.

Expressed by the venom gland.

It is found in the secreted. Blocks small conductance calcium-activated potassium channels (KCNN, SK). Low toxicity by intracerebroventricular injection into mice. This is Potassium channel toxin alpha-KTx 9.2 from Olivierus martensii (Manchurian scorpion).